A 199-amino-acid polypeptide reads, in one-letter code: Dephospho-CoA kinase (199 aa).

The DPCK domain maps to 3 to 199; it reads VIGLTGSIGM…AAAKMPRRRS (197 aa). 11–16 serves as a coordination point for ATP; it reads GMGKST.

It belongs to the CoaE family.

Its subcellular location is the cytoplasm. It carries out the reaction 3'-dephospho-CoA + ATP = ADP + CoA + H(+). Its pathway is cofactor biosynthesis; coenzyme A biosynthesis; CoA from (R)-pantothenate: step 5/5. Catalyzes the phosphorylation of the 3'-hydroxyl group of dephosphocoenzyme A to form coenzyme A. The sequence is that of Dephospho-CoA kinase from Nitrobacter winogradskyi (strain ATCC 25391 / DSM 10237 / CIP 104748 / NCIMB 11846 / Nb-255).